A 248-amino-acid chain; its full sequence is Superoxide dismutase [Mn] 1 (248 aa).

The signal sequence occupies residues 1–41; it reads MQTTFRRILILFVGLLVPLFFACQSNSQVDAAPSAAPQLSA. Residues histidine 68, histidine 123, aspartate 208, and histidine 212 each coordinate Mn(2+).

It belongs to the iron/manganese superoxide dismutase family. As to quaternary structure, homodimer. The cofactor is Mn(2+).

It catalyses the reaction 2 superoxide + 2 H(+) = H2O2 + O2. In terms of biological role, destroys superoxide anion radicals which are normally produced within the cells and which are toxic to biological systems. This chain is Superoxide dismutase [Mn] 1 (sodA1), found in Leptolyngbya boryana (Plectonema boryanum).